The primary structure comprises 81 residues: Putative membrane protein insertion efficiency factor (81 aa).

Belongs to the UPF0161 family.

The protein resides in the cell inner membrane. Its function is as follows. Could be involved in insertion of integral membrane proteins into the membrane. The chain is Putative membrane protein insertion efficiency factor from Legionella pneumophila (strain Lens).